A 451-amino-acid polypeptide reads, in one-letter code: DNA polymerase IV (451 aa).

Positions 5–187 (VIHVDMDAFF…LPVGRLWGVG (183 aa)) constitute a UmuC domain. The Mg(2+) site is built by D9 and D104. E105 is an active-site residue.

Belongs to the DNA polymerase type-Y family. In terms of assembly, monomer. Requires Mg(2+) as cofactor.

Its subcellular location is the cytoplasm. It catalyses the reaction DNA(n) + a 2'-deoxyribonucleoside 5'-triphosphate = DNA(n+1) + diphosphate. Poorly processive, error-prone DNA polymerase involved in untargeted mutagenesis. Copies undamaged DNA at stalled replication forks, which arise in vivo from mismatched or misaligned primer ends. These misaligned primers can be extended by PolIV. Exhibits no 3'-5' exonuclease (proofreading) activity. May be involved in translesional synthesis, in conjunction with the beta clamp from PolIII. In Corynebacterium diphtheriae (strain ATCC 700971 / NCTC 13129 / Biotype gravis), this protein is DNA polymerase IV.